Reading from the N-terminus, the 324-residue chain is MLKTRAMFPHKDQAMSLSLDPQSDLVVGHTNNRPITNPLALSLLIGLNNKNKCISDSDFVRSPKSPLEFRVLSTMADSFFLRSPRSSLTAHLNCCCGPAAKVGLSIVDSLGDDRCLLPDIVFGPALRIKCSEVMDKHPKLLFPVANKSKKIENERSGVVFEIGDNSSETEPVGLRNRSFSANDCLRKTRVLSRSKLGQEGDFPGSGSDNAFSSEDDMEDYTCIIAHGPNPKTTHIYGDRVLECHKNELKGDEDNKEKFGSVFPSDNFLGICNFCNKKLGGGDDIYMYREKSFCSEECRSEEMMIDEEDLEEPCIDMHESLKKLF.

The FLZ-type zinc finger occupies 266-309 (NFLGICNFCNKKLGGGDDIYMYREKSFCSEECRSEEMMIDEEDL).

The protein belongs to the FLZ family. As to quaternary structure, interacts with KIN10 and KIN11 via its FLZ-type zinc finger domain. Forms heterodimer with FLZ2 in vitro.

Its subcellular location is the cytoplasm. It is found in the nucleus. In terms of biological role, may act as an adapter to facilitate the interaction of SnRK1 complex with effector proteins, conferring tissue- and stimulus-type specific differences in the SnRK1 regulation pathway. This is FCS-Like Zinc finger 11 from Arabidopsis thaliana (Mouse-ear cress).